The sequence spans 517 residues: Retrotransposon-like protein 1 (517 aa).

2 disordered regions span residues 1–29 (MEVN…QQQL) and 142–161 (EEER…DARS).

This chain is Retrotransposon-like protein 1 (retr-1), found in Caenorhabditis elegans.